A 432-amino-acid polypeptide reads, in one-letter code: Meiotically up-regulated gene 134 protein (432 aa).

It belongs to the UPF0300 family.

Its subcellular location is the cytoplasm. It localises to the cell cortex. Has a role in meiosis. The chain is Meiotically up-regulated gene 134 protein (mug134) from Schizosaccharomyces pombe (strain 972 / ATCC 24843) (Fission yeast).